The chain runs to 62 residues: Large ribosomal subunit protein bL32 (62 aa).

The segment at 1–20 is disordered; the sequence is MAVPARHTSKQKKRSRRGHI. Residues 7 to 20 show a composition bias toward basic residues; that stretch reads HTSKQKKRSRRGHI.

This sequence belongs to the bacterial ribosomal protein bL32 family.

This Lactobacillus acidophilus (strain ATCC 700396 / NCK56 / N2 / NCFM) protein is Large ribosomal subunit protein bL32.